Reading from the N-terminus, the 413-residue chain is Histidine decarboxylase (413 aa).

Position 129 (histidine 129) interacts with substrate. Position 242 is an N6-(pyridoxal phosphate)lysine (lysine 242).

The protein belongs to the group II decarboxylase family. Pyridoxal 5'-phosphate serves as cofactor. Ripe fruits; not detected in leaves and unripe fruit.

It catalyses the reaction L-histidine + H(+) = histamine + CO2. The polypeptide is Histidine decarboxylase (HDC) (Solanum lycopersicum (Tomato)).